The sequence spans 1047 residues: Carbamoyl phosphate synthase arginine-specific large chain (1047 aa).

Positions 1–401 (MPKRTDIQSV…GLQKAVRSLE (401 aa)) are carboxyphosphate synthetic domain. Arg129, Arg169, Gly175, Gly176, Lys208, Ile210, Glu215, Gly241, Val242, His243, Gln284, and Glu298 together coordinate ATP. An ATP-grasp 1 domain is found at 133–327 (RQLMHELHEP…IARMAAKLSL (195 aa)). 3 residues coordinate Mg(2+): Gln284, Glu298, and Asn300. Mn(2+) is bound by residues Gln284, Glu298, and Asn300. An oligomerization domain region spans residues 402-549 (IKTHGLSLPS…YSSWTGENDL (148 aa)). Residues 550–933 (LLPEKAKERV…AFRKAFAWGE (384 aa)) are carbamoyl phosphate synthetic domain. The region spanning 676 to 865 (YEFMRSVEVP…LITYTIDVLF (190 aa)) is the ATP-grasp 2 domain. Positions 712, 750, 756, 781, 782, 783, 784, 824, and 836 each coordinate ATP. Mg(2+) is bound by residues Gln824, Glu836, and Asn838. Mn(2+) is bound by residues Gln824, Glu836, and Asn838. Residues 934-1047 (EQTPALFRKK…PFLLPDVVMN (114 aa)) form an allosteric domain region. Residues 937–1047 (PALFRKKGSV…PFLLPDVVMN (111 aa)) form the MGS-like domain.

This sequence belongs to the CarB family. In terms of assembly, composed of two chains; the small (or glutamine) chain promotes the hydrolysis of glutamine to ammonia, which is used by the large (or ammonia) chain to synthesize carbamoyl phosphate. Tetramer of heterodimers (alpha,beta)4. The cofactor is Mg(2+). Mn(2+) is required as a cofactor.

The catalysed reaction is hydrogencarbonate + L-glutamine + 2 ATP + H2O = carbamoyl phosphate + L-glutamate + 2 ADP + phosphate + 2 H(+). The enzyme catalyses hydrogencarbonate + NH4(+) + 2 ATP = carbamoyl phosphate + 2 ADP + phosphate + 2 H(+). It participates in amino-acid biosynthesis; L-arginine biosynthesis; carbamoyl phosphate from bicarbonate: step 1/1. In terms of biological role, large subunit of the glutamine-dependent carbamoyl phosphate synthetase (CPSase). CPSase catalyzes the formation of carbamoyl phosphate from the ammonia moiety of glutamine, carbonate, and phosphate donated by ATP, constituting the first step of the biosynthetic pathway leading to arginine and/or urea. The large subunit (synthetase) binds the substrates ammonia (free or transferred from glutamine from the small subunit), hydrogencarbonate and ATP and carries out an ATP-coupled ligase reaction, activating hydrogencarbonate by forming carboxy phosphate which reacts with ammonia to form carbamoyl phosphate. In Halalkalibacterium halodurans (strain ATCC BAA-125 / DSM 18197 / FERM 7344 / JCM 9153 / C-125) (Bacillus halodurans), this protein is Carbamoyl phosphate synthase arginine-specific large chain.